A 335-amino-acid chain; its full sequence is DNA-directed RNA polymerases I and III subunit RPAC1 (335 aa).

An N-acetylserine modification is found at S2. Position 17 is a phosphoserine (S17).

This sequence belongs to the archaeal Rpo3/eukaryotic RPB3 RNA polymerase subunit family. Component of the RNA polymerase I (Pol I) complex consisting of 14 subunits: RPA135, RPA190, RPC40, RPA14, RPB5, RPO26, RPA43, RPB8, RPA12, RPB10, RPC19, RPC10, RPA49 and RPA34. The complex is composed of a horseshoe-shaped core containing ten subunits (RPA135, RPA190, RPB5, RPO26, RPB8, RPB10, RPC10, RPA12, RPC19 and RPC40) where RPA135 and RPA190 form the DNA-binding cleft. Outside of the core, RPA14 and RPA43 form the stalk that mediates interactions with transcription initiation factors and newly synthesized RNA. Component of the RNA polymerase III (Pol III) complex consisting of at least 17 subunits. Interacts with the RPC19/RPAC2 and RPC53/RPC4. Interacts with retrotransposons Ty integrase, targeting Ty1, Ty2 and Ty4 integration upstream of pol III-transcribed genes.

It is found in the nucleus. The protein localises to the nucleolus. Its function is as follows. DNA-dependent RNA polymerases catalyze the transcription of DNA into RNA using the four ribonucleoside triphosphates as substrates. Common component of RNA polymerases I (Pol I) and III (Pol III) which synthesize ribosomal RNA precursors and small RNAs, such as 5S rRNA and tRNAs, respectively. RPC40 is part of the polymerase core and may function as a clamp element that moves to open and close the cleft. Plays an important role in targeting retrotransposons Ty integration upstream of pol III-transcribed genes such as tRNA genes, allowing Ty1, Ty2 and Ty4 to proliferate and yet minimizing genetic damage. The sequence is that of DNA-directed RNA polymerases I and III subunit RPAC1 from Saccharomyces cerevisiae (strain ATCC 204508 / S288c) (Baker's yeast).